We begin with the raw amino-acid sequence, 244 residues long: INO80 complex subunit E (244 aa).

Residues 10 to 54 adopt a coiled-coil conformation; sequence DYKKKYRNLKRKLKFLIYEHECFQEELRKAQRKLLKVSRDKSFLL. Disordered regions lie at residues 59 to 187 and 222 to 244; these read QYEN…PLTF and FSDA…DIPE. Low complexity-rich tracts occupy residues 99-115 and 122-136; these read PPLG…LPPS and ASRA…LASP. Residues 157 to 171 show a composition bias toward basic residues; the sequence is RPKREKRPRLPRKLK. Glycyl lysine isopeptide (Lys-Gly) (interchain with G-Cter in SUMO2) cross-links involve residues lysine 159 and lysine 171. A compositionally biased stretch (acidic residues) spans 230–244; it reads DALDGDDDLVIDIPE.

As to quaternary structure, component of the chromatin remodeling INO80 complex; specifically part of a complex module associated with the N-terminus of INO80.

The protein localises to the nucleus. Functionally, putative regulatory component of the chromatin remodeling INO80 complex which is involved in transcriptional regulation, DNA replication and probably DNA repair. In Bos taurus (Bovine), this protein is INO80 complex subunit E (INO80E).